Here is a 595-residue protein sequence, read N- to C-terminus: Chaperone protein HscA homolog (595 aa).

This sequence belongs to the heat shock protein 70 family.

Its function is as follows. Chaperone involved in the maturation of iron-sulfur cluster-containing proteins. Has a low intrinsic ATPase activity which is markedly stimulated by HscB. The protein is Chaperone protein HscA homolog of Rickettsia rickettsii (strain Iowa).